Here is a 391-residue protein sequence, read N- to C-terminus: Ferrochelatase (391 aa).

The Fe cation site is built by His-196 and Glu-281.

The protein belongs to the ferrochelatase family.

The protein resides in the cytoplasm. The enzyme catalyses heme b + 2 H(+) = protoporphyrin IX + Fe(2+). The protein operates within porphyrin-containing compound metabolism; protoheme biosynthesis; protoheme from protoporphyrin-IX: step 1/1. Functionally, catalyzes the ferrous insertion into protoporphyrin IX. This Prochlorococcus marinus (strain NATL2A) protein is Ferrochelatase.